A 421-amino-acid chain; its full sequence is MAATLSVEPTGRSCWDEPLSIAVRGLAPEQPVTLRSVLRDEKGALFRAHARYRADSHGELDLARVPALGGSFSGLEPMGLLWAMEPDRPFWRLIKRDVQTPFLVELEVLDGHEPDGGRRLARTVHERHFMAPGVRRVPVREGRVRATLFLPPGQGPFPGIIDVYGVGGGLLEYRAGLVAGHGFATLALAFYDFEDLPKELNVIEVDYFEEAVRYMLRHPKVKGPDIGLLGLSLGADVCLIMASFLNNVSATVSINGSAFSGNRHIKYKQTMIPPLGHDLRRMKVAFSGILDIVDIRNDAVGGCENPSMIPIEKAKGPILFVAGQDDHCWRSELYTQIASDRLQAHGKERPQVLSYPGTGHYIEPPYFPMCPASLHKIVNEAVIWGGEVKAHSKAQIDAWKQILFFFGKHLGSTHSRASCRL.

Residue S232 is the Charge relay system of the active site. K313 is subject to N6-succinyllysine. Catalysis depends on charge relay system residues D326 and H360. Positions 419-421 (CRL) match the Microbody targeting signal motif.

It belongs to the C/M/P thioester hydrolase family. In terms of tissue distribution, mainly expressed in liver and kidney. Weakly expressed in other tissues including intestine, adrenal gland and adipose tissues.

The protein resides in the peroxisome. It carries out the reaction succinyl-CoA + H2O = succinate + CoA + H(+). The enzyme catalyses glutaryl-CoA + H2O = glutarate + CoA + H(+). It participates in lipid metabolism; fatty acid metabolism. Catalyzes the hydrolysis of acyl-CoAs into free fatty acids and coenzyme A (CoASH), regulating their respective intracellular levels. In contrast to its human ortholog, functions essentially as a succinyl-CoA thioesterase with no activity with medium to long chain saturated acyl-CoAs and with a low activity toward glutaryl-CoA. The chain is Peroxisomal succinyl-coenzyme A thioesterase (Acot4) from Mus musculus (Mouse).